Reading from the N-terminus, the 491-residue chain is Serine/threonine-protein kinase 33 (491 aa).

A disordered region spans residues 51-89; that stretch reads FASQERKKERNTSRESSLKDLSIRTSNVERKPQAQWSRS. Positions 54 to 82 are enriched in basic and acidic residues; it reads QERKKERNTSRESSLKDLSIRTSNVERKP. Positions 111–377 constitute a Protein kinase domain; that stretch reads YTFGRILGQG…AKELLDNQWL (267 aa). ATP is bound by residues 117-125 and K140; that span reads LGQGSFGMV. The active-site Proton acceptor is D233. The interval 398 to 491 is disordered; it reads KNNPESDEET…TTLFRGKKRL (94 aa). Residues 402–414 are compositionally biased toward acidic residues; that stretch reads ESDEETNTDEETE. Position 403 is a phosphoserine (S403). Residues 415-431 are compositionally biased toward polar residues; it reads QSAVYSPSANTAKQPTN. Low complexity predominate over residues 445-457; that stretch reads SSNSSSSKLLSAE. Polar residues predominate over residues 475-484; sequence AKTTLKSTTL.

The protein belongs to the protein kinase superfamily. CAMK Ser/Thr protein kinase family. CaMK subfamily. As to quaternary structure, homodimer. In terms of processing, autophosphorylated. Highly expressed in testis, particularly in cells from the spermatogenic epithelia. Present in meiotic and post meiotic sperm cells. Significant expression is detected in lung epithelia, alveolar macrophages, horizontal cells in the retina and in embryonic organs such as heart, brain and spinal cord. Also expressed in pituitary gland, kidney, pancreas, trachea and thyroid gland.

It is found in the cytoplasm. The protein localises to the cytoskeleton. The protein resides in the perinuclear region. The catalysed reaction is L-seryl-[protein] + ATP = O-phospho-L-seryl-[protein] + ADP + H(+). It carries out the reaction L-threonyl-[protein] + ATP = O-phospho-L-threonyl-[protein] + ADP + H(+). Specifically inhibited by CDD-2807 ((3-([1,1'-Biphenyl]-2-ylethynyl)-1H-indazol-5-yl)(2,6-diazaspiro[3.5]nonan-2-yl)methanone). CDD-2807 is a potential male contraceptive drug: it is not toxic, efficiently crosses the blood-testis barrier and induces a reversible contraceptive effect in male mice. In terms of biological role, serine/threonine protein kinase required for spermatid differentiation and male fertility. Promotes sperm flagella assembly during spermatogenesis by mediating phosphorylation of fibrous sheath proteins AKAP3 and AKAP4. Also phosphorylates vimentin/VIM, thereby regulating the dynamic behavior of the intermediate filament cytoskeleton. This is Serine/threonine-protein kinase 33 from Mus musculus (Mouse).